We begin with the raw amino-acid sequence, 106 residues long: UPF0145 protein CKL_2433 (106 aa).

It belongs to the UPF0145 family.

This chain is UPF0145 protein CKL_2433, found in Clostridium kluyveri (strain ATCC 8527 / DSM 555 / NBRC 12016 / NCIMB 10680 / K1).